Consider the following 257-residue polypeptide: Probable pectate lyase G (257 aa).

The first 24 residues, 1–24 (MPVLSKLLPTLTLTLPLLAGPCLA), serve as a signal peptide directing secretion.

Belongs to the polysaccharide lyase 3 family. Requires Ca(2+) as cofactor.

The protein localises to the secreted. The enzyme catalyses Eliminative cleavage of (1-&gt;4)-alpha-D-galacturonan to give oligosaccharides with 4-deoxy-alpha-D-galact-4-enuronosyl groups at their non-reducing ends.. Its function is as follows. Pectinolytic enzyme consist of four classes of enzymes: pectin lyase, polygalacturonase, pectin methylesterase and rhamnogalacturonase. Among pectinolytic enzymes, pectin lyase is the most important in depolymerization of pectin, since it cleaves internal glycosidic bonds of highly methylated pectins. Favors pectate, the anion, over pectin, the methyl ester. This Emericella nidulans (strain FGSC A4 / ATCC 38163 / CBS 112.46 / NRRL 194 / M139) (Aspergillus nidulans) protein is Probable pectate lyase G (plyG).